We begin with the raw amino-acid sequence, 364 residues long: Triacylglycerol lipase (364 aa).

A signal peptide spans Met1–Pro44. The region spanning Pro54–Gly266 is the AB hydrolase-1 domain. Leu61 serves as a coordination point for substrate. Ser131 functions as the Nucleophile in the catalytic mechanism. Gln132 is a binding site for substrate. A disulfide bond links Cys234 and Cys314. Asp286 is a binding site for Ca(2+). Residues Asp308 and His330 each act as charge relay system in the active site. The Ca(2+) site is built by Asp332, Gln336, and Val340.

This sequence belongs to the AB hydrolase superfamily. Pseudomonas lipase family. As to quaternary structure, monomer. The cofactor is Ca(2+).

The protein localises to the secreted. The enzyme catalyses a triacylglycerol + H2O = a diacylglycerol + a fatty acid + H(+). Its activity is regulated as follows. Inhibited by RC-(Rp,Sp)- and SC-(Rp,Sp)-1,2-dioctylcarbamoylglycero-3-O-p-nitrophenyl octylphosphonate. Also inhibited by diethyl-p-nitrophenylphosphate (E600). Its function is as follows. Catalyzes the hydrolysis of triacylglycerol. It shows a preference for triacylglycerols with a chain length between 6 and 12 carbons. The sequence is that of Triacylglycerol lipase from Burkholderia cepacia (Pseudomonas cepacia).